The primary structure comprises 316 residues: Aspartate carbamoyltransferase catalytic subunit (316 aa).

The carbamoyl phosphate site is built by arginine 59 and threonine 60. Lysine 88 serves as a coordination point for L-aspartate. Positions 109, 137, and 140 each coordinate carbamoyl phosphate. L-aspartate contacts are provided by arginine 170 and arginine 232. The carbamoyl phosphate site is built by leucine 269 and proline 270.

It belongs to the aspartate/ornithine carbamoyltransferase superfamily. ATCase family. Heterooligomer of catalytic and regulatory chains.

It carries out the reaction carbamoyl phosphate + L-aspartate = N-carbamoyl-L-aspartate + phosphate + H(+). It participates in pyrimidine metabolism; UMP biosynthesis via de novo pathway; (S)-dihydroorotate from bicarbonate: step 2/3. Its function is as follows. Catalyzes the condensation of carbamoyl phosphate and aspartate to form carbamoyl aspartate and inorganic phosphate, the committed step in the de novo pyrimidine nucleotide biosynthesis pathway. The protein is Aspartate carbamoyltransferase catalytic subunit of Methanobrevibacter smithii (strain ATCC 35061 / DSM 861 / OCM 144 / PS).